The following is a 2936-amino-acid chain: Neurobeachin (2936 aa).

A disordered region spans residues 961–985; the sequence is ENIKKGKKGNVSTISGLSSQTAGAK. A compositionally biased stretch (polar residues) spans 970–982; it reads NVSTISGLSSQTA. Ser1001 and Ser1004 each carry phosphoserine. Composition is skewed to polar residues over residues 1203 to 1220 and 1231 to 1241; these read TSDG…SSTK and TLETESSNSKA. Disordered regions lie at residues 1203–1222, 1231–1265, and 1270–1289; these read TSDG…TKGL, TLET…ESGK, and IQTT…QQDR. A compositionally biased stretch (basic and acidic residues) spans 1253 to 1265; sequence DTERSDDGKESGK. A compositionally biased stretch (polar residues) spans 1270 to 1286; the sequence is IQTTATTQAVQGRSSTQ. Residues 1316–1358 form a WD 1 repeat; the sequence is TTMFRIPEFKWSPMHQRLLTDLLFALETDVHVWRSHSTKSVMD. 4 disordered regions span residues 1480–1521, 1639–1667, 1701–1721, and 1830–1850; these read QRDR…LSPI, PDTV…DSGM, VKKS…PAPS, and TGAV…VNGA. Phosphoserine is present on Ser1519. Positions 1701 to 1714 are enriched in basic and acidic residues; the sequence is VKKSQESLTEHPSE. Phosphoserine is present on residues Ser1704 and Ser1707. Positions 1835-1845 are enriched in low complexity; sequence SGSSSSSSSSS. Ser2128 carries the post-translational modification Phosphoserine. The 109-residue stretch at 2137–2245 folds into the BEACH-type PH domain; the sequence is NLAGPVVLST…TVKKVVYSLP (109 aa). The region spanning 2264-2553 is the BEACH domain; sequence ATPRQLYKSS…QLLIEPHPPR (290 aa). Ser2565 carries the post-translational modification Phosphoserine. WD repeat units follow at residues 2708-2751, 2768-2808, 2850-2889, and 2892-2931; these read GHWD…HIIG, GHDH…RALE, EIND…QLYI, and GCDA…WHYE.

The protein belongs to the WD repeat neurobeachin family. In terms of assembly, interacts with RII subunit of PKA. In terms of tissue distribution, forebrain, brainstem and cerebellum.

The protein localises to the membrane. It localises to the endomembrane system. Its subcellular location is the postsynaptic cell membrane. Its function is as follows. Binds to type II regulatory subunits of protein kinase A and anchors/targets them to the membrane. May anchor the kinase to cytoskeletal and/or organelle-associated proteins. May have a role in membrane trafficking. This Mus musculus (Mouse) protein is Neurobeachin (Nbea).